The primary structure comprises 245 residues: Probable phosphatase YcdX (245 aa).

The Zn(2+) site is built by His7, His9, His15, His40, Glu73, His101, His131, Asp192, and His194.

The protein belongs to the PHP family. Homotrimer. Zn(2+) is required as a cofactor.

The polypeptide is Probable phosphatase YcdX (Escherichia coli O127:H6 (strain E2348/69 / EPEC)).